The primary structure comprises 203 residues: Translation initiation factor IF-3 (203 aa).

A compositionally biased stretch (basic and acidic residues) spans 172 to 182 (EAPKNEKKTKE). A disordered region spans residues 172 to 203 (EAPKNEKKTKENNPPFNRINLMKGENHAKNED).

Belongs to the IF-3 family. As to quaternary structure, monomer.

It is found in the cytoplasm. IF-3 binds to the 30S ribosomal subunit and shifts the equilibrium between 70S ribosomes and their 50S and 30S subunits in favor of the free subunits, thus enhancing the availability of 30S subunits on which protein synthesis initiation begins. In Helicobacter pylori (strain J99 / ATCC 700824) (Campylobacter pylori J99), this protein is Translation initiation factor IF-3.